The sequence spans 54 residues: MARNEIRPIVKLRSTAGTGYTYVTRKNRRNDPDRLMLKKCDPVVRRHVDFREER.

This sequence belongs to the bacterial ribosomal protein bL33 family.

The protein is Large ribosomal subunit protein bL33B of Mycobacterium sp. (strain KMS).